Here is a 327-residue protein sequence, read N- to C-terminus: Transaldolase (327 aa).

Catalysis depends on K132, which acts as the Schiff-base intermediate with substrate.

Belongs to the transaldolase family. Type 1 subfamily.

It localises to the cytoplasm. The catalysed reaction is D-sedoheptulose 7-phosphate + D-glyceraldehyde 3-phosphate = D-erythrose 4-phosphate + beta-D-fructose 6-phosphate. It functions in the pathway carbohydrate degradation; pentose phosphate pathway; D-glyceraldehyde 3-phosphate and beta-D-fructose 6-phosphate from D-ribose 5-phosphate and D-xylulose 5-phosphate (non-oxidative stage): step 2/3. Its function is as follows. Transaldolase is important for the balance of metabolites in the pentose-phosphate pathway. The polypeptide is Transaldolase (Chlamydia pneumoniae (Chlamydophila pneumoniae)).